The chain runs to 153 residues: UPF0756 membrane protein Lm4b_01579 (153 aa).

4 helical membrane passes run 6–26 (MLFLLLFLLLGLIAKNNSLII), 54–74 (WGVTIITVAILIPIATGQIGF), 80–100 (SFKSAAGWIGLGAGIAVSILA), and 117–137 (LVFGTILAVVLFRGIAAGPVI).

This sequence belongs to the UPF0756 family.

The protein localises to the cell membrane. This chain is UPF0756 membrane protein Lm4b_01579, found in Listeria monocytogenes serotype 4b (strain CLIP80459).